A 388-amino-acid polypeptide reads, in one-letter code: Protochlorophyllide reductase A, chloroplastic (388 aa).

Residues 1–74 constitute a chloroplast transit peptide; the sequence is MALQLLPSTL…KPSGKKTLRQ (74 aa).

The protein belongs to the short-chain dehydrogenases/reductases (SDR) family. POR subfamily.

It is found in the plastid. The protein localises to the chloroplast. It catalyses the reaction chlorophyllide a + NADP(+) = protochlorophyllide a + NADPH + H(+). The protein operates within porphyrin-containing compound metabolism; chlorophyll biosynthesis. Its function is as follows. Phototransformation of protochlorophyllide (Pchlide) to chlorophyllide (Chlide). The polypeptide is Protochlorophyllide reductase A, chloroplastic (PORA) (Triticum aestivum (Wheat)).